A 330-amino-acid polypeptide reads, in one-letter code: tRNA N6-adenosine threonylcarbamoyltransferase (330 aa).

Positions 110 and 114 each coordinate Fe cation. Residues 133–137 (MVSGG), D166, G179, D183, and N271 contribute to the substrate site. D299 is a binding site for Fe cation.

It belongs to the KAE1 / TsaD family. Requires Fe(2+) as cofactor.

It localises to the cytoplasm. It carries out the reaction L-threonylcarbamoyladenylate + adenosine(37) in tRNA = N(6)-L-threonylcarbamoyladenosine(37) in tRNA + AMP + H(+). Required for the formation of a threonylcarbamoyl group on adenosine at position 37 (t(6)A37) in tRNAs that read codons beginning with adenine. Is involved in the transfer of the threonylcarbamoyl moiety of threonylcarbamoyl-AMP (TC-AMP) to the N6 group of A37, together with TsaE and TsaB. TsaD likely plays a direct catalytic role in this reaction. The polypeptide is tRNA N6-adenosine threonylcarbamoyltransferase (Thermosipho africanus (strain TCF52B)).